Consider the following 403-residue polypeptide: 5,7-dihydroxy-2-methylchromone synthase (403 aa).

His68 lines the CoA pocket. Cys174 is a catalytic residue. Cys174 carries the post-translational modification Cysteine sulfinic acid (-SO2H). CoA-binding positions include Leu277, Ser281, and 318–321 (GGRA).

The protein belongs to the thiolase-like superfamily. Chalcone/stilbene synthases family. Homodimer.

It catalyses the reaction 5 malonyl-CoA + 4 H(+) = 5,7-dihydroxy-2-methyl-4H-chromen-4-one + 5 CO2 + 5 CoA + H2O. The protein operates within secondary metabolite biosynthesis; flavonoid biosynthesis. Functionally, catalyzes the iterative condensations of 5 molecules of malonyl-CoA to produce a pentaketide 5,7-dihydroxy-2-methylchromone. This Aloe arborescens (Kidachi aloe) protein is 5,7-dihydroxy-2-methylchromone synthase.